Reading from the N-terminus, the 286-residue chain is 4-hydroxy-tetrahydrodipicolinate synthase 2 (286 aa).

Thr45 is a binding site for pyruvate. Tyr133 serves as the catalytic Proton donor/acceptor. The Schiff-base intermediate with substrate role is filled by Lys161. Ile203 provides a ligand contact to pyruvate.

This sequence belongs to the DapA family. Homotetramer; dimer of dimers.

The protein resides in the cytoplasm. It catalyses the reaction L-aspartate 4-semialdehyde + pyruvate = (2S,4S)-4-hydroxy-2,3,4,5-tetrahydrodipicolinate + H2O + H(+). Its pathway is amino-acid biosynthesis; L-lysine biosynthesis via DAP pathway; (S)-tetrahydrodipicolinate from L-aspartate: step 3/4. Catalyzes the condensation of (S)-aspartate-beta-semialdehyde [(S)-ASA] and pyruvate to 4-hydroxy-tetrahydrodipicolinate (HTPA). This is 4-hydroxy-tetrahydrodipicolinate synthase 2 from Clostridium acetobutylicum (strain ATCC 824 / DSM 792 / JCM 1419 / IAM 19013 / LMG 5710 / NBRC 13948 / NRRL B-527 / VKM B-1787 / 2291 / W).